The primary structure comprises 184 residues: Acetyl-CoA decarbonylase/synthase complex subunit epsilon 1 (184 aa).

Belongs to the CdhB family. In terms of assembly, heterotetramer of two alpha and two epsilon subunits. The ACDS complex is made up of alpha, epsilon, beta, gamma and delta subunits with a probable stoichiometry of (alpha(2)epsilon(2))(4)-beta(8)-(gamma(1)delta(1))(8).

In terms of biological role, part of a complex that catalyzes the reversible cleavage of acetyl-CoA, allowing autotrophic growth from CO(2). The alpha-epsilon subcomponent functions as a carbon monoxide dehydrogenase. The precise role of the epsilon subunit is unclear; it may have a stabilizing role within the alpha(2)epsilon(2) component and/or be involved in electron transfer to FAD during a potential FAD-mediated CO oxidation. In Archaeoglobus fulgidus (strain ATCC 49558 / DSM 4304 / JCM 9628 / NBRC 100126 / VC-16), this protein is Acetyl-CoA decarbonylase/synthase complex subunit epsilon 1 (cdhB1).